The sequence spans 469 residues: Bifunctional protein GlmU (469 aa).

A pyrophosphorylase region spans residues 1–236 (MLNIKLNIVI…ISEINGINDC (236 aa)). UDP-N-acetyl-alpha-D-glucosamine is bound by residues 11 to 14 (LAAG), K25, Q83, 88 to 89 (GT), 110 to 112 (YGD), G147, E161, N176, and N234. D112 contributes to the Mg(2+) binding site. N234 is a Mg(2+) binding site. A linker region spans residues 237–257 (AQLANLERLYQKEQAESLLRI). The segment at 258–469 (GVIIADPNRF…KKKIRYNIIY (212 aa)) is N-acetyltransferase. UDP-N-acetyl-alpha-D-glucosamine is bound by residues R340 and K358. H370 serves as the catalytic Proton acceptor. The UDP-N-acetyl-alpha-D-glucosamine site is built by Y373 and N384. Residues A387, 393-394 (NY), S412, A430, and R447 each bind acetyl-CoA.

The protein in the N-terminal section; belongs to the N-acetylglucosamine-1-phosphate uridyltransferase family. This sequence in the C-terminal section; belongs to the transferase hexapeptide repeat family. As to quaternary structure, homotrimer. The cofactor is Mg(2+).

It is found in the cytoplasm. The catalysed reaction is alpha-D-glucosamine 1-phosphate + acetyl-CoA = N-acetyl-alpha-D-glucosamine 1-phosphate + CoA + H(+). The enzyme catalyses N-acetyl-alpha-D-glucosamine 1-phosphate + UTP + H(+) = UDP-N-acetyl-alpha-D-glucosamine + diphosphate. Its pathway is nucleotide-sugar biosynthesis; UDP-N-acetyl-alpha-D-glucosamine biosynthesis; N-acetyl-alpha-D-glucosamine 1-phosphate from alpha-D-glucosamine 6-phosphate (route II): step 2/2. The protein operates within nucleotide-sugar biosynthesis; UDP-N-acetyl-alpha-D-glucosamine biosynthesis; UDP-N-acetyl-alpha-D-glucosamine from N-acetyl-alpha-D-glucosamine 1-phosphate: step 1/1. It functions in the pathway bacterial outer membrane biogenesis; LPS lipid A biosynthesis. Catalyzes the last two sequential reactions in the de novo biosynthetic pathway for UDP-N-acetylglucosamine (UDP-GlcNAc). The C-terminal domain catalyzes the transfer of acetyl group from acetyl coenzyme A to glucosamine-1-phosphate (GlcN-1-P) to produce N-acetylglucosamine-1-phosphate (GlcNAc-1-P), which is converted into UDP-GlcNAc by the transfer of uridine 5-monophosphate (from uridine 5-triphosphate), a reaction catalyzed by the N-terminal domain. The polypeptide is Bifunctional protein GlmU (Baumannia cicadellinicola subsp. Homalodisca coagulata).